A 190-amino-acid chain; its full sequence is Translation initiation factor IF-3 (190 aa).

It belongs to the IF-3 family. As to quaternary structure, monomer.

Its subcellular location is the cytoplasm. Its function is as follows. IF-3 binds to the 30S ribosomal subunit and shifts the equilibrium between 70S ribosomes and their 50S and 30S subunits in favor of the free subunits, thus enhancing the availability of 30S subunits on which protein synthesis initiation begins. This chain is Translation initiation factor IF-3, found in Prochlorococcus marinus (strain MIT 9312).